The chain runs to 184 residues: RNA 2',3'-cyclic phosphodiesterase (184 aa).

H42 serves as the catalytic Proton donor. 2 short sequence motifs (HXTX) span residues 42 to 45 (HFTL) and 127 to 130 (HLTV). The active-site Proton acceptor is the H127.

It belongs to the 2H phosphoesterase superfamily. ThpR family.

The catalysed reaction is a 3'-end 2',3'-cyclophospho-ribonucleotide-RNA + H2O = a 3'-end 2'-phospho-ribonucleotide-RNA + H(+). Functionally, hydrolyzes RNA 2',3'-cyclic phosphodiester to an RNA 2'-phosphomonoester. The protein is RNA 2',3'-cyclic phosphodiesterase of Methanothermobacter thermautotrophicus (strain ATCC 29096 / DSM 1053 / JCM 10044 / NBRC 100330 / Delta H) (Methanobacterium thermoautotrophicum).